A 238-amino-acid polypeptide reads, in one-letter code: N-acetylneuraminic acid outer membrane channel protein NanC (238 aa).

A signal peptide spans 1-23 (MKKAKILSGVLLLCFSSPLISQA). Topologically, residues 24–25 (AT) are periplasmic. A membrane pass occupies residues 26–32 (LDVRGGY). Residues 33–39 (RSGSHAY) are Extracellular-facing. At 40 to 49 (ETRLKVSEGW) the chain is embedded in the membrane. Over 50–52 (QNG) the chain is Periplasmic. Positions 53 to 61 (WWASMESNT) form a transmembrane segment. Residues 62–76 (WNTIHDNKKENAALN) lie on the Extracellular side of the membrane. Positions 77–86 (DVQVEVNYAI) form a transmembrane segment. The Periplasmic portion of the chain corresponds to 87–91 (KLDDQ). Positions 92–102 (WTVRPGMLTHF) form a transmembrane segment. The Extracellular segment spans residues 103–107 (SSNGT). Residues 108–117 (RYGPYVKLSW) are membrane-embedded. Over 118–122 (DATKD) the chain is Periplasmic. Positions 123–132 (LNFGIRYRYD) form a transmembrane segment. Residues 133 to 151 (WKAYRQQDLSGDMSRDNVH) are Extracellular-facing. Positions 152-159 (RWDGYVTY) form a transmembrane segment. Topologically, residues 160–164 (HINSD) are periplasmic. Residues 165–173 (FTFAWQTTL) are membrane-embedded. Residues 174–190 (YSKQNDYRYANHKKWAT) are Extracellular-facing. The segment at 191–200 (ENAFVLQYHM) is a transmembrane helix. Residues 201-203 (TPD) are Periplasmic-facing. Residues 204–212 (ITPYIEYDY) are membrane-embedded. Residues 213-228 (LDRQGVYNGRDNLSEN) lie on the Extracellular side of the membrane. Positions 229 to 236 (SYRIGVSF) form a transmembrane segment. Residues 237-238 (KL) are Periplasmic-facing.

It belongs to the oligogalacturonate-specific porin KdgM (TC 1.B.35) family. NanC subfamily. As to quaternary structure, monomer.

It is found in the cell outer membrane. It carries out the reaction N-acetylneuraminate(in) = N-acetylneuraminate(out). In terms of biological role, outer membrane channel protein allowing the entry of N-acetylneuraminic acid (Neu5Ac, the most abundant sialic acid on host cell surfaces) into the bacteria. NanC proteins form high-conductance channels which are open at low membrane potentials and which have a weak anion selectivity. The sequence is that of N-acetylneuraminic acid outer membrane channel protein NanC (nanC) from Escherichia coli O157:H7.